Reading from the N-terminus, the 100-residue chain is Small ribosomal subunit protein uS14c (100 aa).

This sequence belongs to the universal ribosomal protein uS14 family. In terms of assembly, part of the 30S ribosomal subunit.

The protein localises to the plastid. It is found in the chloroplast. Functionally, binds 16S rRNA, required for the assembly of 30S particles. The chain is Small ribosomal subunit protein uS14c from Cyanidium caldarium (Red alga).